We begin with the raw amino-acid sequence, 218 residues long: Riboflavin kinase (218 aa).

The interval 1–27 is disordered; sequence MRPDGPRDPVAGPDSGPEPPYPVRLSG. Mg(2+)-binding residues include T44 and N46. The Nucleophile role is filled by E120.

Belongs to the flavokinase family. It depends on Zn(2+) as a cofactor. Mg(2+) is required as a cofactor.

It catalyses the reaction riboflavin + ATP = FMN + ADP + H(+). It functions in the pathway cofactor biosynthesis; FMN biosynthesis; FMN from riboflavin (ATP route): step 1/1. Functionally, catalyzes the phosphorylation of riboflavin (vitamin B2) to form flavin mononucleotide (FMN) coenzyme. The protein is Riboflavin kinase (fmn1) of Neosartorya fischeri (strain ATCC 1020 / DSM 3700 / CBS 544.65 / FGSC A1164 / JCM 1740 / NRRL 181 / WB 181) (Aspergillus fischerianus).